We begin with the raw amino-acid sequence, 305 residues long: U6 small nuclear RNA (adenine-(43)-N(6))-methyltransferase (305 aa).

5 residues coordinate S-adenosyl-L-methionine: arginine 87, glycine 112, glutamate 135, threonine 166, and asparagine 188. Positions 197-221 (PNPLGGNTRNPERRPAPNNARTGSQ) are disordered.

It belongs to the methyltransferase superfamily. METTL16/RlmF family.

The catalysed reaction is adenosine in U6 snRNA + S-adenosyl-L-methionine = N(6)-methyladenosine in U6 snRNA + S-adenosyl-L-homocysteine + H(+). RNA N6-methyltransferase that mediates N6-methylation of adenine of U6 small nuclear RNA (U6 snRNA). The protein is U6 small nuclear RNA (adenine-(43)-N(6))-methyltransferase of Drosophila melanogaster (Fruit fly).